The sequence spans 93 residues: Pyrimidine/purine nucleoside phosphorylase (93 aa).

The protein belongs to the nucleoside phosphorylase PpnP family.

The enzyme catalyses a purine D-ribonucleoside + phosphate = a purine nucleobase + alpha-D-ribose 1-phosphate. It carries out the reaction adenosine + phosphate = alpha-D-ribose 1-phosphate + adenine. The catalysed reaction is cytidine + phosphate = cytosine + alpha-D-ribose 1-phosphate. It catalyses the reaction guanosine + phosphate = alpha-D-ribose 1-phosphate + guanine. The enzyme catalyses inosine + phosphate = alpha-D-ribose 1-phosphate + hypoxanthine. It carries out the reaction thymidine + phosphate = 2-deoxy-alpha-D-ribose 1-phosphate + thymine. The catalysed reaction is uridine + phosphate = alpha-D-ribose 1-phosphate + uracil. It catalyses the reaction xanthosine + phosphate = alpha-D-ribose 1-phosphate + xanthine. In terms of biological role, catalyzes the phosphorolysis of diverse nucleosides, yielding D-ribose 1-phosphate and the respective free bases. Can use uridine, adenosine, guanosine, cytidine, thymidine, inosine and xanthosine as substrates. Also catalyzes the reverse reactions. The chain is Pyrimidine/purine nucleoside phosphorylase from Shewanella pealeana (strain ATCC 700345 / ANG-SQ1).